The sequence spans 143 residues: Auxin-responsive protein SAUR67 (143 aa).

This sequence belongs to the ARG7 family.

It is found in the cell membrane. In terms of biological role, may promote auxin-stimulated organ elongation, such as hypocotyls, stamen filaments and petals. This Arabidopsis thaliana (Mouse-ear cress) protein is Auxin-responsive protein SAUR67.